The chain runs to 91 residues: Small ribosomal subunit protein uS19 (91 aa).

The protein belongs to the universal ribosomal protein uS19 family.

Its function is as follows. Protein S19 forms a complex with S13 that binds strongly to the 16S ribosomal RNA. This chain is Small ribosomal subunit protein uS19, found in Pseudoalteromonas atlantica (strain T6c / ATCC BAA-1087).